A 530-amino-acid polypeptide reads, in one-letter code: UDP-glucuronosyltransferase 2B15 (530 aa).

Residues 1 to 23 form the signal peptide; sequence MSGKWISALLLLQISFCFKSGNC. An N-linked (GlcNAc...) asparagine glycan is attached at asparagine 316. A helical membrane pass occupies residues 494 to 510; it reads VIGFLLSCVAVTVVLAL.

The protein belongs to the UDP-glycosyltransferase family. N-glycosylated. In terms of tissue distribution, liver. Lower levels seen in the kidney and testis.

It is found in the endoplasmic reticulum membrane. It carries out the reaction glucuronate acceptor + UDP-alpha-D-glucuronate = acceptor beta-D-glucuronoside + UDP + H(+). The enzyme catalyses 17alpha-estradiol + UDP-alpha-D-glucuronate = 17alpha-estradiol 3-O-(beta-D-glucuronate) + UDP + H(+). The catalysed reaction is 16alpha,17alpha-estriol + UDP-alpha-D-glucuronate = 16alpha,17alpha-estriol 3-O-(beta-D-glucuronate) + UDP + H(+). It catalyses the reaction 17beta-hydroxy-5alpha-androstan-3-one + UDP-alpha-D-glucuronate = 5alpha-dihydrotestosterone 17-O-(beta-D-glucuronate) + UDP + H(+). UDP-glucuronosyltransferase (UGT) that catalyzes phase II biotransformation reactions in which lipophilic substrates are conjugated with glucuronic acid to increase the metabolite's water solubility, thereby facilitating excretion into either the urine or bile. Essential for the elimination and detoxification of drugs, xenobiotics and endogenous compounds. Catalyzes the glucuronidation of endogenous steroid hormones such as androgens (testosterone, androsterone) and estrogens (estradiol, epiestradiol, estriol, catechol estrogens). Displays glucuronidation activity toward several classes of xenoblotic substrates, including phenolic compounds (eugenol, 4-nitrophenol, 4-hydroxybiphenyl) and phenylpropanoids (naringenin, coumarins). Catalyzes the glucuronidation of monoterpenoid alcohols such as borneol, menthol and isomenthol, a class of natural compounds used in essential oils. In Rattus norvegicus (Rat), this protein is UDP-glucuronosyltransferase 2B15.